A 240-amino-acid polypeptide reads, in one-letter code: MTPTIELICGHRSIRHFTDEPISEAQREAIINSARATSSSSFLQCSSIIRITDKALREELVTLTGGQKHVAQAAEFWVFCADFNRHLQICPDAQLGLAEQLLLGVVDTAMMAQNALIAAESLGLGGVYIGGLRNNIEAVTKLLKLPQHVLPLFGLCLGWPADNPDLKPRLPASILVHENSYQPLDKGALAQYDEQLAEYYLTRGSNNRRDTWSDHIRRTIIKESRPFILDYLHKQGWATR.

Residues 11–15 (HRSIR), serine 39, glutamine 67, 128–131 (YIGG), and 167–169 (KPR) contribute to the FMN site.

The protein belongs to the flavin oxidoreductase frp family. Homodimer. It depends on FMN as a cofactor.

Functionally, catalyzes the reduction of nitroaromatic compounds using NADPH. Has a broad electron acceptor specificity. Reduces nitrofurazone by a ping-pong bi-bi mechanism possibly to generate a two-electron transfer product. Major oxygen-insensitive nitroreductase in E.coli. This chain is Oxygen-insensitive NADPH nitroreductase (nfsA), found in Escherichia coli (strain K12).